The following is a 338-amino-acid chain: Ketol-acid reductoisomerase (NADP(+)) (338 aa).

The KARI N-terminal Rossmann domain occupies 1–181 (MNVFYDKDAD…GGGRAGIIET (181 aa)). NADP(+)-binding positions include 24–27 (YGSQ), arginine 47, and serine 52. Residue histidine 107 is part of the active site. Glycine 133 is a binding site for NADP(+). The KARI C-terminal knotted domain occupies 182–327 (NFREETETDL…AKLRAMMPWI (146 aa)). Residues aspartate 190, glutamate 194, glutamate 226, and glutamate 230 each contribute to the Mg(2+) site. Substrate is bound at residue serine 251.

Belongs to the ketol-acid reductoisomerase family. The cofactor is Mg(2+).

The enzyme catalyses (2R)-2,3-dihydroxy-3-methylbutanoate + NADP(+) = (2S)-2-acetolactate + NADPH + H(+). The catalysed reaction is (2R,3R)-2,3-dihydroxy-3-methylpentanoate + NADP(+) = (S)-2-ethyl-2-hydroxy-3-oxobutanoate + NADPH + H(+). Its pathway is amino-acid biosynthesis; L-isoleucine biosynthesis; L-isoleucine from 2-oxobutanoate: step 2/4. The protein operates within amino-acid biosynthesis; L-valine biosynthesis; L-valine from pyruvate: step 2/4. In terms of biological role, involved in the biosynthesis of branched-chain amino acids (BCAA). Catalyzes an alkyl-migration followed by a ketol-acid reduction of (S)-2-acetolactate (S2AL) to yield (R)-2,3-dihydroxy-isovalerate. In the isomerase reaction, S2AL is rearranged via a Mg-dependent methyl migration to produce 3-hydroxy-3-methyl-2-ketobutyrate (HMKB). In the reductase reaction, this 2-ketoacid undergoes a metal-dependent reduction by NADPH to yield (R)-2,3-dihydroxy-isovalerate. This is Ketol-acid reductoisomerase (NADP(+)) from Burkholderia multivorans (strain ATCC 17616 / 249).